A 276-amino-acid chain; its full sequence is Halorhodopsin (276 aa).

Residues 1-21 constitute a propeptide that is removed on maturation; that stretch reads MTAASTTATTMLQATQSDVLQ. Residues 22-25 are Extracellular-facing; sequence EIQS. The chain crosses the membrane as a helical span at residues 26 to 51; it reads NFLLNSSIWVNIALAGVVILLFVAMG. Residues 52 to 57 are Cytoplasmic-facing; it reads RDIESP. Residues 58-81 traverse the membrane as a helical segment; it reads RAKLIWVATMLVPLVSISSYAGLA. Residues 82 to 105 lie on the Extracellular side of the membrane; it reads SGLTVGFLQMPPGHALAGQEVLSP. A helical membrane pass occupies residues 106–127; the sequence is WGRYLTWTFSTPMILLALGLLA. The Cytoplasmic portion of the chain corresponds to 128–130; that stretch reads DTD. The chain crosses the membrane as a helical span at residues 131–154; sequence IASLFTAITMDIGMCVTGLAAALI. Topologically, residues 155–157 are extracellular; sequence TSS. Residues 158–180 traverse the membrane as a helical segment; it reads HLLRWVFYGISCAFFVAVLYVLL. Residues 181–192 lie on the Cytoplasmic side of the membrane; the sequence is VQWPADAEAAGT. The helical transmembrane segment at 193–216 threads the bilayer; sequence SEIFGTLKILTVVLWLGYPILWAL. The Extracellular portion of the chain corresponds to 217 to 225; the sequence is GSEGVALLS. Residues 226–254 form a helical membrane-spanning segment; it reads VGVTSWGYSGLDILAKYVFAFLLLRWVAA. K241 bears the N6-(retinylidene)lysine mark. The Cytoplasmic segment spans residues 255–276; that stretch reads NEGAVSGSGMSIGSGGAAPADD.

This sequence belongs to the archaeal/bacterial/fungal opsin family.

It localises to the cell membrane. Its function is as follows. Light-driven chloride pump. The sequence is that of Halorhodopsin (hop) from Halobacterium halobium (strain port).